Consider the following 179-residue polypeptide: Inosine/xanthosine triphosphatase (179 aa).

8-13 lines the substrate pocket; it reads TTNPAK. Residues aspartate 38 and glutamate 68 each coordinate Mg(2+). 68–69 contacts substrate; that stretch reads EA.

It belongs to the YjjX NTPase family. Homodimer. It depends on Mg(2+) as a cofactor. Mn(2+) serves as cofactor.

It carries out the reaction XTP + H2O = XDP + phosphate + H(+). The catalysed reaction is ITP + H2O = IDP + phosphate + H(+). Phosphatase that hydrolyzes non-canonical purine nucleotides such as XTP and ITP to their respective diphosphate derivatives. Probably excludes non-canonical purines from DNA/RNA precursor pool, thus preventing their incorporation into DNA/RNA and avoiding chromosomal lesions. The chain is Inosine/xanthosine triphosphatase from Pectobacterium carotovorum subsp. carotovorum (strain PC1).